A 752-amino-acid polypeptide reads, in one-letter code: Pentatricopeptide repeat-containing protein At5g13270, chloroplastic (752 aa).

Residues 1–80 (MTILTVQSSF…LQEMDKAGVS (80 aa)) constitute a chloroplast transit peptide. PPR repeat units lie at residues 47–81 (QGQV…GVSV), 82–116 (SSYS…IENP), 117–147 (SVLL…MSEL), 148–182 (NAVS…GDKP), 183–217 (PSSM…GLCS), 218–248 (NTSI…MAVK), 249–283 (KPVA…GVEW), 284–318 (DSFV…GLES), 319–349 (EVSV…IREP), 350–384 (NDVS…NASI), 386–420 (NSFT…SLIG), 421–451 (SQYG…MDNP), 452–486 (DIVA…GMKP), 487–522 (NSVT…NVAP), and 523–553 (TIDH…MPFE). The segment at 558 to 633 (SWKCFLSGCW…ELSCSWIQEK (76 aa)) is type E motif. The interval 634-664 (GKIHRFIVGDKHHPQTQEIYEKLKEFDGFME) is type E(+) motif. Residues 665 to 752 (GDMFQCNMTE…EGKCSCNDYW (88 aa)) form a type DYW motif region.

The protein belongs to the PPR family. PCMP-H subfamily.

Its subcellular location is the plastid. It is found in the chloroplast. This chain is Pentatricopeptide repeat-containing protein At5g13270, chloroplastic (PCMP-H90), found in Arabidopsis thaliana (Mouse-ear cress).